Consider the following 101-residue polypeptide: NADH-quinone oxidoreductase subunit K (101 aa).

The next 3 membrane-spanning stretches (helical) occupy residues 4–24 (LAHF…GIFL), 30–50 (IVLL…FVAF), and 61–81 (VFVF…LAIL).

Belongs to the complex I subunit 4L family. In terms of assembly, NDH-1 is composed of 14 different subunits. Subunits NuoA, H, J, K, L, M, N constitute the membrane sector of the complex.

It is found in the cell inner membrane. The catalysed reaction is a quinone + NADH + 5 H(+)(in) = a quinol + NAD(+) + 4 H(+)(out). Its function is as follows. NDH-1 shuttles electrons from NADH, via FMN and iron-sulfur (Fe-S) centers, to quinones in the respiratory chain. The immediate electron acceptor for the enzyme in this species is believed to be ubiquinone. Couples the redox reaction to proton translocation (for every two electrons transferred, four hydrogen ions are translocated across the cytoplasmic membrane), and thus conserves the redox energy in a proton gradient. The protein is NADH-quinone oxidoreductase subunit K of Cupriavidus pinatubonensis (strain JMP 134 / LMG 1197) (Cupriavidus necator (strain JMP 134)).